Consider the following 168-residue polypeptide: 6,7-dimethyl-8-ribityllumazine synthase (168 aa).

Residues tryptophan 31, serine 65 to glutamate 67, and asparagine 90 to isoleucine 92 each bind 5-amino-6-(D-ribitylamino)uracil. Position 95–96 (glutamate 95–threonine 96) interacts with (2S)-2-hydroxy-3-oxobutyl phosphate. Histidine 98 (proton donor) is an active-site residue. Phenylalanine 123 lines the 5-amino-6-(D-ribitylamino)uracil pocket. Arginine 137 is a binding site for (2S)-2-hydroxy-3-oxobutyl phosphate.

Belongs to the DMRL synthase family.

It carries out the reaction (2S)-2-hydroxy-3-oxobutyl phosphate + 5-amino-6-(D-ribitylamino)uracil = 6,7-dimethyl-8-(1-D-ribityl)lumazine + phosphate + 2 H2O + H(+). It participates in cofactor biosynthesis; riboflavin biosynthesis; riboflavin from 2-hydroxy-3-oxobutyl phosphate and 5-amino-6-(D-ribitylamino)uracil: step 1/2. Its function is as follows. Catalyzes the formation of 6,7-dimethyl-8-ribityllumazine by condensation of 5-amino-6-(D-ribitylamino)uracil with 3,4-dihydroxy-2-butanone 4-phosphate. This is the penultimate step in the biosynthesis of riboflavin. The protein is 6,7-dimethyl-8-ribityllumazine synthase of Christiangramia forsetii (strain DSM 17595 / CGMCC 1.15422 / KT0803) (Gramella forsetii).